The sequence spans 432 residues: Probable exopolygalacturonase X (432 aa).

The first 23 residues, 1 to 23 (MKFSYSFVQVVTLLLSLSPSVEG), serve as a signal peptide directing secretion. N-linked (GlcNAc...) asparagine glycosylation is found at Asn113, Asn129, and Asn199. The PbH1 1 repeat unit spans residues 231 to 252 (SDNIVIQNSVINNGDDCVSFKP). Asp245 functions as the Proton donor in the catalytic mechanism. A disulfide bridge links Cys247 with Cys264. N-linked (GlcNAc...) asparagine glycans are attached at residues Asn253 and Asn265. PbH1 repeat units follow at residues 254–274 (STNILVQNLHCNGSHGISVGS), 285–306 (VQNVLVYNISMYNASDGARIKV), and 327–348 (VKNVTYNQMYIENVDWAIEVTQ). His268 is an active-site residue. N-linked (GlcNAc...) asparagine glycosylation is found at Asn292, Asn297, Asn329, Asn354, and Asn364. One copy of the PbH1 5 repeat lies at 362-394 (PSNLTISDIHFKNFRGTTSGKRDPNVGTIVCSS). A disulfide bond links Cys392 and Cys398.

It belongs to the glycosyl hydrolase 28 family.

It localises to the secreted. It carries out the reaction [(1-&gt;4)-alpha-D-galacturonosyl](n) + H2O = alpha-D-galacturonate + [(1-&gt;4)-alpha-D-galacturonosyl](n-1). In terms of biological role, specific in hydrolyzing the terminal glycosidic bond of polygalacturonic acid and oligogalacturonates. The chain is Probable exopolygalacturonase X (pgaX) from Aspergillus fumigatus (strain CBS 144.89 / FGSC A1163 / CEA10) (Neosartorya fumigata).